A 441-amino-acid chain; its full sequence is Probable pyridine nucleotide-disulfide oxidoreductase RclA (441 aa).

33 to 43 (EQSNAMYGGTC) provides a ligand contact to FAD. Residues C43 and C48 are joined by a disulfide bond. The Proton acceptor role is filled by H426.

Belongs to the class-I pyridine nucleotide-disulfide oxidoreductase family. FAD is required as a cofactor.

In terms of biological role, probably involved in reactive chlorine species (RCS) stress resistance. In Escherichia coli (strain K12), this protein is Probable pyridine nucleotide-disulfide oxidoreductase RclA (rclA).